The sequence spans 305 residues: Tyrosine recombinase XerC (305 aa).

Residues 1–93 (MVLDGFAAYF…AWRQYCAWLV (93 aa)) form the Core-binding (CB) domain. In terms of domain architecture, Tyr recombinase spans 114-294 (RVPKALPQEW…DFDHIARLYD (181 aa)). Residues Arg155, Lys179, His246, Arg249, and His272 contribute to the active site. Tyr281 functions as the O-(3'-phospho-DNA)-tyrosine intermediate in the catalytic mechanism.

Belongs to the 'phage' integrase family. XerC subfamily. Forms a cyclic heterotetrameric complex composed of two molecules of XerC and two molecules of XerD.

It localises to the cytoplasm. Site-specific tyrosine recombinase, which acts by catalyzing the cutting and rejoining of the recombining DNA molecules. The XerC-XerD complex is essential to convert dimers of the bacterial chromosome into monomers to permit their segregation at cell division. It also contributes to the segregational stability of plasmids. The sequence is that of Tyrosine recombinase XerC from Neisseria gonorrhoeae (strain ATCC 700825 / FA 1090).